Here is a 400-residue protein sequence, read N- to C-terminus: CRAL-TRIO domain-containing protein C34C12.6 (400 aa).

The CRAL-TRIO domain maps to 87-270 (ELPSIAPFLQ…EYGGEFVNTV (184 aa)). The 96-residue stretch at 304–399 (PKSSHKDVSP…TLKLEYTVAI (96 aa)) folds into the GOLD domain.

This chain is CRAL-TRIO domain-containing protein C34C12.6, found in Caenorhabditis elegans.